We begin with the raw amino-acid sequence, 471 residues long: UDP-glycosyltransferase CGT (471 aa).

The Proton acceptor role is filled by histidine 24. Histidine 24 is a binding site for an anthocyanidin. The active-site Charge relay is aspartate 120. UDP-alpha-D-glucose is bound at residue threonine 143. The UDP stretch occupies residues 280–281; it reads SR. UDP-alpha-D-glucose contacts are provided by valine 343, glutamine 345, histidine 360, tryptophan 363, asparagine 364, serine 365, and glutamate 368. An anthocyanidin is bound at residue glycine 383. Residues aspartate 384 and glutamine 385 each coordinate UDP-alpha-D-glucose.

It belongs to the UDP-glycosyltransferase family.

It catalyses the reaction a 3'-hydro-2'-hydroxy-beta-oxodihydrochalcone + UDP-alpha-D-glucose = a 3'-(beta-D-glucopyranosyl)-2'-hydroxy-beta-oxodihydrochalcone + UDP + H(+). UDP-glucose-dependent glucosyltransferase catalyzing the c-glucosylation of 2-hydroxyflavanones. Acts preferentially on the dibenzoylmethane tautomers formed in equilibrium with 2-hydroxyflavanones. No activity with naringenin or naringenin chalcone. The sequence is that of UDP-glycosyltransferase CGT from Oryza sativa subsp. indica (Rice).